Reading from the N-terminus, the 592-residue chain is Delta-like protein 3 (592 aa).

A signal peptide spans 1-32 (MVSLQVSPLSQTLILAFLLPQALPAGVFELQI). Residues 33–490 (HSFGPGPGLG…LRQADPQRFL (458 aa)) lie on the Extracellular side of the membrane. The region spanning 174–213 (ARCEPPAVGAACARLCRSRSAPSRCGPGLRPCTPFPDECE) is the DSL domain. EGF-like domains are found at residues 214–247 (APSV…PLCT), 272–308 (GPGP…LRCE), 310–349 (SGVT…SNCE), 351–387 (RVDR…PRCE), 389–425 (DLDD…RDCR), and 427–463 (RADP…VRCE). Cystine bridges form between cysteine 218-cysteine 229, cysteine 222-cysteine 235, cysteine 237-cysteine 246, cysteine 276-cysteine 287, cysteine 281-cysteine 296, cysteine 298-cysteine 307, cysteine 314-cysteine 325, cysteine 319-cysteine 337, cysteine 339-cysteine 348, cysteine 355-cysteine 366, cysteine 360-cysteine 375, cysteine 377-cysteine 386, cysteine 393-cysteine 404, cysteine 398-cysteine 413, cysteine 415-cysteine 424, cysteine 431-cysteine 442, cysteine 436-cysteine 451, and cysteine 453-cysteine 462. A helical transmembrane segment spans residues 491–511 (LPPALGLLVAAGLAGAALLVI). Residues 512–592 (HVRRRGPGQD…REDWLIQVLF (81 aa)) lie on the Cytoplasmic side of the membrane. Residues 548 to 567 (QDGAGDGPSSSADWNHPEDG) are disordered.

In terms of assembly, can bind and activate Notch-1 or another Notch receptor. Post-translationally, ubiquitinated by MIB (MIB1 or MIB2), leading to its endocytosis and subsequent degradation. Predominantly expressed in the neuroectoderm and paraxial mesoderm during embryogenesis.

The protein localises to the membrane. In terms of biological role, inhibits primary neurogenesis. May be required to divert neurons along a specific differentiation pathway. Plays a role in the formation of somite boundaries during segmentation of the paraxial mesoderm. This is Delta-like protein 3 (Dll3) from Mus musculus (Mouse).